A 399-amino-acid chain; its full sequence is Putative gustatory receptor 59e (399 aa).

The Cytoplasmic segment spans residues 1-33 (MDSSYWENLLLTINRFLGVYPSGRVGVLRWLHT). Residues 34-54 (LWSLFLLMYIWTGSIVKCLEF) form a helical membrane-spanning segment. Topologically, residues 55–65 (TVEIPTIEKLL) are extracellular. Residues 66–86 (YLMEFPGNMATIAILVYYAVL) traverse the membrane as a helical segment. Topologically, residues 87-120 (NRPLAHGAELQIERIITGLKGKAKRLVYKRHGQR) are cytoplasmic. A helical membrane pass occupies residues 121-141 (TLHLMATTLVFHGLCVLVDVV). The Extracellular portion of the chain corresponds to 142-206 (NYDFEFWTTW…RPPQGSTKLD (65 aa)). A helical transmembrane segment spans residues 207–227 (ACYESAFAVLVDAGGGSALMI). Over 228–250 (EEMRYTCNLIEQVHSQFLLRFGL) the chain is Cytoplasmic. A helical transmembrane segment spans residues 251–271 (YLVLNLLNSLVSICVELYLIF). Over 272 to 282 (NFFETPLWEES) the chain is Extracellular. The chain crosses the membrane as a helical span at residues 283–303 (VLLVYRLLWLAMHGGRIWFIL). The Cytoplasmic segment spans residues 304–361 (SVNEQILEQKCNLCQLLNELEVCSSRLQRTINRFLLQLQRSIDQPLEACGIVTLDTRS). The chain crosses the membrane as a helical span at residues 362-382 (LGGFIGVLMAIVIFLIQIGLG). N-linked (GlcNAc...) asparagine glycans are attached at residues asparagine 383 and asparagine 392. The Extracellular portion of the chain corresponds to 383 to 399 (NKSLMGVALNRSNWVYV).

It belongs to the insect chemoreceptor superfamily. Gustatory receptor (GR) family. Gr10a subfamily. As to expression, expressed in the adult labellar chemosensory neurons. In larvae, is expressed in neurons of the terminal external chemosensory organ.

The protein resides in the cell membrane. In terms of biological role, probable gustatory receptor which mediates acceptance or avoidance behavior, depending on its substrates. The protein is Putative gustatory receptor 59e (Gr59e) of Drosophila melanogaster (Fruit fly).